A 675-amino-acid polypeptide reads, in one-letter code: MVRRAPGASLALLLWVTAVSGSPAGPGAATARRQDEAFSTARCTSRCLSLQITRISAFFKHFQNNGSLAWCQNHKQCSKCLEPCKESWDLKKNHCQSFCEPLFPKKNYECLTSCEFLKYILSVKQGDCPAPEKASGFAAACVESCEADSECSGVKKCCSNGCGHTCQVPKNLYKGVPLKPRKELKFIELQSGDLEVKWSSKFNISIEPVIYVVQRRWNQGIHPSEDDATNWQTVAQTTDERVQLSDIRASRWYQFRVAAVNVHGTRGFTAPSKHFRSSKDPSAPPAPSNIRIANISANNDGTVNVMITWDLPEEPDIPVHHYKVFWSWTYSKYVIPAKKKRRKITDGPQNYVVLEGLQPNSNYNVELQAVTRWGQIRLKSAKVSLHFSTAQDNRNNNEQTSAGKPPKGLVDPYPTFQRRKPTRFLKIGTPFYQDNQLQVKVYWKKTDINMNQFQVHSLLESCVHNDTKGLEKVTELTYENYMILKDLSFSCKYKVTVLPAKSKSRFKAESIFFVTPSCSAFKEKTHKHINCAAEEVPVLPKVLAKPENLSASFIVQEGNITGHFSWKISKAVLHQPMTGFQVTWAEVTTESRQNSLPNSIISQSQILPADHYVLTVPNLRPSMLYRLEVQVLTTGGEGPATIKLFRTPDLPPFLPHRPHLKQHHPHHYKPPPEKY.

The signal sequence occupies residues 1–21; that stretch reads MVRRAPGASLALLLWVTAVSG. Intrachain disulfides connect Cys-43/Cys-77, Cys-47/Cys-71, Cys-80/Cys-99, Cys-84/Cys-95, and Cys-110/Cys-114. An N-linked (GlcNAc...) asparagine glycan is attached at Asn-65. In terms of domain architecture, WAP spans 121 to 170; the sequence is LSVKQGDCPAPEKASGFAAACVESCEADSECSGVKKCCSNGCGHTCQVPK. 4 Fibronectin type-III domains span residues 180–281, 286–392, 418–515, and 545–652; these read PRKE…SKDP, APSN…TAQD, RRKP…FFVT, and KPEN…DLPP. N-linked (GlcNAc...) asparagine glycosylation is found at Asn-203 and Asn-294. Positions 388 to 402 are enriched in polar residues; it reads STAQDNRNNNEQTSA. Residues 388–413 are disordered; sequence STAQDNRNNNEQTSAGKPPKGLVDPY. 3 N-linked (GlcNAc...) asparagine glycosylation sites follow: Asn-465, Asn-548, and Asn-559. The segment at 654-675 is disordered; sequence LPHRPHLKQHHPHHYKPPPEKY. Basic residues predominate over residues 656–669; it reads HRPHLKQHHPHHYK.

Mainly expressed in neurons of the central nervous system during the second half of embryonic life. Expressed in mitral neurons of the olfactory bulbs, striatal neurons, Purkinje cells of the cerebellum, retinal neurons and neurons of the brainstem and spinal cord.

The protein resides in the cell surface. Functionally, may be an adhesion-like molecule with anti-protease activity. This Gallus gallus (Chicken) protein is Anosmin-1.